Reading from the N-terminus, the 522-residue chain is DNA-binding protein Ikaros (522 aa).

2 disordered regions span residues 1-48 (MEME…HNNR) and 96-115 (AKVN…YSSA). 4 C2H2-type zinc fingers span residues 125-147 (LKCD…KRSH), 153-175 (FQCT…IKLH), 181-203 (FKCH…LRTH), and 209-232 (HKCA…ERCH). The tract at residues 379–406 (KSASSEKDGSPSHSGQDSTDTESNNEEK) is disordered. 2 consecutive C2H2-type zinc fingers follow at residues 468 to 490 (YRCE…MGCH) and 496 to 520 (FECN…RGEH).

This sequence belongs to the Ikaros C2H2-type zinc-finger protein family. Expression mainly limited to thymus, spleen and pronephros. Very low expression in liver. No expression in testis, brain, eye and muscle.

The protein localises to the nucleus. Functionally, binds and activates the enhancer (delta-A element) of the CD3-delta gene. Functions in the specification and the maturation of the T-lymphocyte. Also interacts with a critical control element in the TDT (terminal deoxynucleotidyltransferase) promoter as well as with the promoters for other genes expressed during early stages of B- and T-cell development. Function is isoform-specific and is modulated by dominant-negative inactive isoforms. This chain is DNA-binding protein Ikaros (ikzf1), found in Oncorhynchus mykiss (Rainbow trout).